Here is a 634-residue protein sequence, read N- to C-terminus: Calcium up-regulated protein D (634 aa).

The tract at residues 1 to 23 (MINIEDISKSSNQSEEKQLKSTS) is disordered. Ricin B-type lectin domains follow at residues 27–146 (KPKY…WTTF) and 117–250 (PGNG…WGIN).

It belongs to the cup family.

It is found in the cytoplasm. It localises to the membrane. Its function is as follows. May play an important role in stabilizing and/or regulating the cell membrane during Ca(2+) stress or certain stages of development. This chain is Calcium up-regulated protein D (cupD), found in Dictyostelium discoideum (Social amoeba).